Consider the following 304-residue polypeptide: D-alanine--D-alanine ligase (304 aa).

An ATP-grasp domain is found at 107 to 300; it reads KRLWQGSGLP…FDELVARILG (194 aa). 134–186 contributes to the ATP binding site; it reads VGYPVIVKPAREGSSLGMSRVEGPEELAEAYRVAAAYDDTVLAEAWVEGEEYT. Positions 254, 267, and 269 each coordinate Mg(2+).

Belongs to the D-alanine--D-alanine ligase family. Requires Mg(2+) as cofactor. Mn(2+) is required as a cofactor.

It localises to the cytoplasm. The enzyme catalyses 2 D-alanine + ATP = D-alanyl-D-alanine + ADP + phosphate + H(+). It functions in the pathway cell wall biogenesis; peptidoglycan biosynthesis. Functionally, cell wall formation. This chain is D-alanine--D-alanine ligase, found in Halorhodospira halophila (strain DSM 244 / SL1) (Ectothiorhodospira halophila (strain DSM 244 / SL1)).